We begin with the raw amino-acid sequence, 1400 residues long: Tiny macrocysts protein C (1400 aa).

8 helical membrane passes run 59–79, 112–132, 152–172, 196–216, 240–260, 266–286, 296–316, and 320–340; these read ILTI…GFKQ, IFFW…WYVA, FVST…LIGL, ANLS…IVGF, FDVY…LVDF, SIVY…ILPY, SGFY…MGIN, and TATT…IGYF. Disordered stretches follow at residues 367-393 and 683-712; these read FNEI…SKVT and ERSG…RGKY. Residues 369–386 show a composition bias toward basic and acidic residues; sequence EITKNEKSKTGDSKEKES. Transmembrane regions (helical) follow at residues 726–746, 975–995, 1162–1182, and 1342–1362; these read WLMI…LIVL, TMLY…AVLF, VLAI…TYSV, and VLTS…LLLF.

The protein localises to the membrane. This is Tiny macrocysts protein C (tmcC) from Dictyostelium discoideum (Social amoeba).